Reading from the N-terminus, the 122-residue chain is Fluoride-specific ion channel FluC 2 (122 aa).

Transmembrane regions (helical) follow at residues 4-24, 38-58, 63-83, and 96-116; these read VAVW…RFVV, LGTL…GGLA, AALL…TWML, and AALA…FIGQ. Na(+) contacts are provided by Gly73 and Thr76.

It belongs to the fluoride channel Fluc/FEX (TC 1.A.43) family.

The protein resides in the cell membrane. It carries out the reaction fluoride(in) = fluoride(out). With respect to regulation, na(+) is not transported, but it plays an essential structural role and its presence is essential for fluoride channel function. Its function is as follows. Fluoride-specific ion channel. Important for reducing fluoride concentration in the cell, thus reducing its toxicity. In Mycolicibacterium paratuberculosis (strain ATCC BAA-968 / K-10) (Mycobacterium paratuberculosis), this protein is Fluoride-specific ion channel FluC 2.